Reading from the N-terminus, the 816-residue chain is H(+)/Cl(-) exchange transporter 5 (816 aa).

The Cytoplasmic portion of the chain corresponds to 1–124 (MAMWQGAMDN…WALIHSVSDA (124 aa)). Transmembrane regions (helical) follow at residues 125-162 (FSGW…ICTG) and 208-231 (VNYF…VKAF). The Selectivity filter part_1 signature appears at 237–241 (GSGIP). Residue serine 238 participates in chloride binding. An intramembrane region (helical) is located at residues 240 to 247 (IPEIKTIL). The next 2 membrane-spanning stretches (helical) occupy residues 256–275 (LGKW…VSSG) and 281–300 (EGPL…HCFN). The short motif at 279–283 (GKEGP) is the Selectivity filter part_2 element. Intramembrane regions (helical) lie at residues 312 to 324 (VLSA…VSVA) and 328 to 336 (PIGGVLFSL). 5 helical membrane passes run 348-366 (LWRS…RSIN), 389-414 (LVPF…IAWC), 422-442 (LGKY…ILAF), 498-518 (MWQL…TFGM), and 523-542 (GLFI…LGVG). The short motif at 523–527 (GLFIP) is the Selectivity filter part_3 element. Chloride is bound at residue phenylalanine 525. Residues 570–584 (GLYAMVGAAACLGGV) constitute an intramembrane region (helical). The note=Loop between two helices intramembrane region spans 585 to 587 (TRM). An intramembrane region (helical) is located at residues 588–599 (TVSLVVIMFELT). An intramembrane region (note=Loop between two helices) is located at residues 600–604 (GGLEY). Residues 605 to 622 (IVPLMAAAMTSKWVADAL) traverse the membrane as a helical segment. Residues 623 to 816 (GREGIYDAHI…NQDPDSILFN (194 aa)) lie on the Cytoplasmic side of the membrane. Tyrosine 628 lines the chloride pocket. 2 consecutive CBS domains span residues 656 to 720 (MKPR…ARKK) and 752 to 812 (ILDL…DPDS). Residues threonine 666, 687 to 689 (YSG), and 794 to 797 (TKKD) each bind ATP.

It belongs to the chloride channel (TC 2.A.49) family. ClC-5/CLCN5 subfamily. Interacts with NEDD4 and NEDD4L. Post-translationally, ubiquitinated by NEDD4L in the presence of albumin; which promotes endocytosis and proteasomal degradation. In terms of tissue distribution, kidney specific.

The protein localises to the golgi apparatus membrane. Its subcellular location is the endosome membrane. It is found in the cell membrane. The catalysed reaction is 2 chloride(in) + H(+)(out) = 2 chloride(out) + H(+)(in). In terms of biological role, proton-coupled chloride transporter. Functions as antiport system and exchanges chloride ions against protons. Important for normal acidification of the endosome lumen. May play an important role in renal tubular function. The CLC channel family contains both chloride channels and proton-coupled anion transporters that exchange chloride or another anion for protons. The absence of conserved gating glutamate residues is typical for family members that function as channels. The polypeptide is H(+)/Cl(-) exchange transporter 5 (Clcn5) (Mus musculus (Mouse)).